A 549-amino-acid polypeptide reads, in one-letter code: Probable protein kinase UbiB (549 aa).

One can recognise a Protein kinase domain in the interval 123 to 501; the sequence is DFDDIPLASA…QQKAHKSNYL (379 aa). ATP is bound by residues 129–137 and lysine 152; that span reads LASASISQV. Aspartate 287 (proton acceptor) is an active-site residue. 2 helical membrane passes run 498-518 and 520-540; these read SNYL…LINQ and ATLW…VLGW.

It belongs to the ABC1 family. UbiB subfamily.

The protein localises to the cell inner membrane. It participates in cofactor biosynthesis; ubiquinone biosynthesis [regulation]. Functionally, is probably a protein kinase regulator of UbiI activity which is involved in aerobic coenzyme Q (ubiquinone) biosynthesis. This Shewanella halifaxensis (strain HAW-EB4) protein is Probable protein kinase UbiB.